The sequence spans 263 residues: (E)-2-((N-methylformamido)methylene)succinate hydrolase (263 aa).

Catalysis depends on S96, which acts as the Nucleophile. Catalysis depends on residues N120 and H241.

The protein belongs to the AB hydrolase superfamily. In terms of assembly, monomer.

It carries out the reaction (E)-2-((N-methylformamido) methylene)succinate + 2 H2O + H(+) = succinate semialdehyde + methylamine + formate + CO2. Involved in the degradation of the pyridine ring of trigonelline (TG; N-methylnicotinate) into succinate and methylamine as carbon and nitrogen sources, respectively. Catalyzes the hydrolysis of (E)-2-((N-methylformamido)methylene)succinate (MFMS) into formic acid, succinate semialdehyde (SSA), methylamine and carbon dioxide. The protein is (E)-2-((N-methylformamido)methylene)succinate hydrolase of Acinetobacter baylyi (strain ATCC 33305 / BD413 / ADP1).